Consider the following 157-residue polypeptide: UPF0212 protein rrnAC1165 (157 aa).

The interval 105 to 157 (VLEIEEIPEESDETTEDESSSAESEADADDPPSDQSADESDDVLPEFEELIDE) is disordered. Residues 106–157 (LEIEEIPEESDETTEDESSSAESEADADDPPSDQSADESDDVLPEFEELIDE) are compositionally biased toward acidic residues.

It belongs to the UPF0212 family.

This Haloarcula marismortui (strain ATCC 43049 / DSM 3752 / JCM 8966 / VKM B-1809) (Halobacterium marismortui) protein is UPF0212 protein rrnAC1165.